Consider the following 424-residue polypeptide: Phosphoribosylamine--glycine ligase (424 aa).

Residues 111–312 form the ATP-grasp domain; sequence KAFVKECGIK…LLDLFLATAK (202 aa). 137-189 lines the ATP pocket; the sequence is IQNASFPLVIKALNKNTSIVHHQEEALKILEDALKQSNEPVIIEPFLEGFELS.

The protein belongs to the GARS family.

The catalysed reaction is 5-phospho-beta-D-ribosylamine + glycine + ATP = N(1)-(5-phospho-beta-D-ribosyl)glycinamide + ADP + phosphate + H(+). The protein operates within purine metabolism; IMP biosynthesis via de novo pathway; N(1)-(5-phospho-D-ribosyl)glycinamide from 5-phospho-alpha-D-ribose 1-diphosphate: step 2/2. The polypeptide is Phosphoribosylamine--glycine ligase (purD) (Helicobacter pylori (strain J99 / ATCC 700824) (Campylobacter pylori J99)).